The chain runs to 71 residues: Large ribosomal subunit protein bL31 (71 aa).

Residues C16, C18, C37, and C40 each coordinate Zn(2+).

Belongs to the bacterial ribosomal protein bL31 family. Type A subfamily. In terms of assembly, part of the 50S ribosomal subunit. Zn(2+) is required as a cofactor.

In terms of biological role, binds the 23S rRNA. In Sodalis glossinidius (strain morsitans), this protein is Large ribosomal subunit protein bL31.